We begin with the raw amino-acid sequence, 55 residues long: UPF0391 membrane protein RALTA_A0099 (55 aa).

2 helical membrane-spanning segments follow: residues Ala-5–Ala-25 and Ile-30–Leu-50.

It belongs to the UPF0391 family.

The protein localises to the cell membrane. The polypeptide is UPF0391 membrane protein RALTA_A0099 (Cupriavidus taiwanensis (strain DSM 17343 / BCRC 17206 / CCUG 44338 / CIP 107171 / LMG 19424 / R1) (Ralstonia taiwanensis (strain LMG 19424))).